Here is a 305-residue protein sequence, read N- to C-terminus: 2-pyrone-4,6-dicarbaxylate hydrolase (305 aa).

Substrate is bound by residues 32-34, Y50, T78, R125, R131, Y158, and H182; that span reads HCH. The active-site Proton acceptor is the D258. A substrate-binding site is contributed by N263.

The protein belongs to the metallo-dependent hydrolases superfamily. PDC hydrolase family.

It catalyses the reaction 2-oxo-2H-pyran-4,6-dicarboxylate + H2O = (1E)-4-oxobut-1-ene-1,2,4-tricarboxylate + H(+). Strongly inhibited by 1 mM Zn(2+), Cu(2+), Mn(2+) and Co(2+) ions. Also inhibited by 5,5'-dithiobis(2-nitrobenzoic acid) (Ellman reagent) in vitro. Functionally, involved in the degradation of aromatic compounds via the protocatechuate 4,5-cleavage pathway. Catalyzes the hydrolysis of 2-pyrone-4,6-dicarboxylate (PDC) to oxalomesaconate (OMA). Also catalyzes the reverse reaction. This Comamonas testosteroni (Pseudomonas testosteroni) protein is 2-pyrone-4,6-dicarbaxylate hydrolase.